Consider the following 365-residue polypeptide: IgG receptor FcRn large subunit p51 (365 aa).

The signal sequence occupies residues 1–21 (MGMPLPWALSLLLVLLPQTWG). Residues 22 to 110 (SETRPPLMYH…KTLEKILNGT (89 aa)) form an alpha-1 region. Residues 22–297 (SETRPPLMYH…VDLDSSARSS (276 aa)) are Extracellular-facing. N-linked (GlcNAc...) asparagine glycosylation is found at Asn108, Asn125, Asn149, and Asn246. The alpha-2 stretch occupies residues 111–200 (YTLQGLLGCE…ERGRRNLEWK (90 aa)). Intrachain disulfides connect Cys119–Cys182 and Cys221–Cys275. Positions 201–290 (EPPSMRLKAR…GLAQPLTVDL (90 aa)) are alpha-3. One can recognise an Ig-like C1-type domain in the interval 202–289 (PPSMRLKARP…EGLAQPLTVD (88 aa)). The interval 291-297 (DSSARSS) is connecting peptide. Residues 298-321 (VPVVGIVLGLLLVVVAIAGGVLLW) form a helical membrane-spanning segment. Residues 322–365 (GRMRSGLPAPWLSLSGDDSGDLLPGGNLPPEAEPQGANAFPATS) lie on the Cytoplasmic side of the membrane. Position 334 is a phosphoserine (Ser334). The disordered stretch occupies residues 343 to 365 (LLPGGNLPPEAEPQGANAFPATS).

It belongs to the immunoglobulin superfamily. In terms of assembly, fcRn complex consists of two subunits: p51, and p14 which is equivalent to beta-2-microglobulin. It forms an MHC class I-like heterodimer. Interacts with albumin/ALB; this interaction regulates ALB homeostasis. Intestinal epithelium of suckling rodents. Expressed in neonatal intestine and fetal yolk sac.

It is found in the cell membrane. It localises to the endosome membrane. In terms of biological role, cell surface receptor that transfers passive humoral immunity from the mother to the newborn. Binds to the Fc region of monomeric immunoglobulin gamma and mediates its selective uptake from milk. IgG in the milk is bound at the apical surface of the intestinal epithelium. The resultant FcRn-IgG complexes are transcytosed across the intestinal epithelium and IgG is released from FcRn into blood or tissue fluids. Throughout life, contributes to effective humoral immunity by recycling IgG and extending its half-life in the circulation. Mechanistically, monomeric IgG binding to FcRn in acidic endosomes of endothelial and hematopoietic cells recycles IgG to the cell surface where it is released into the circulation. In addition of IgG, regulates homeostasis of the other most abundant circulating protein albumin/ALB. The polypeptide is IgG receptor FcRn large subunit p51 (Fcgrt) (Mus musculus (Mouse)).